A 573-amino-acid polypeptide reads, in one-letter code: Poly(ribitol-phosphate) beta-N-acetylglucosaminyltransferase TarS (573 aa).

Residues proline 9, aspartate 41, asparagine 68, arginine 76, 92–94 (DSD), arginine 127, and glutamate 178 contribute to the UDP-N-acetyl-alpha-D-glucosamine site. Residue aspartate 94 coordinates Mn(2+). Catalysis depends on aspartate 179, which acts as the Proton acceptor. UDP-N-acetyl-alpha-D-glucosamine contacts are provided by residues arginine 207 and 211–213 (HMS).

Belongs to the glycosyltransferase 2 family. As to quaternary structure, homotrimer. Mn(2+) serves as cofactor.

It catalyses the reaction 4-O-[(D-ribitylphospho)(n)-di{(2R)-glycerylphospho}]-N-acetyl-beta-D-mannosaminyl-(1-&gt;4)-N-acetyl-alpha-D-glucosaminyl di-trans,octa-cis-undecaprenyl diphosphate + n UDP-N-acetyl-alpha-D-glucosamine = 4-O-([2-N-acetyl-beta-D-glucosaminyl-1-D-ribitylphospho](n)-di{[2R]-1-glycerylphospho})-N-acetyl-beta-D-mannosaminyl-(1-&gt;4)-N-acetyl-alpha-D-glucosaminyl di-trans,octa-cis-undecaprenyl diphosphate + n UDP + n H(+). The protein operates within cell wall biogenesis; poly(ribitol phosphate) teichoic acid biosynthesis. Attaches beta-O-GlcNAc (beta-O-N-acetyl-D-glucosamine) residues to the C4 position of poly(RboP)-wall teichoic acids (WTAs). Prefers UDP-GlcNAc as a donor substrate and is specific for poly(ribitol phosphate) WTAs. Can also use UDP-Glc and UDP-GalNAc, but not UDP-galactose or UDP-glucuronic acid. Mediates beta-lactam resistance in methicillin resistant Staphylococcus aureus (MRSA) strains. This is Poly(ribitol-phosphate) beta-N-acetylglucosaminyltransferase TarS from Staphylococcus aureus (strain MW2).